Here is an 81-residue protein sequence, read N- to C-terminus: METLLNAIPQETLLVIGAYGALGAAYLVVIPLFLYFWMNRRWTVMGKLERLGIYGLVFLFFPGLILFAPFLNLRMSGQGDV.

A run of 2 helical transmembrane segments spans residues 13–33 (LLVIGAYGALGAAYLVVIPLF) and 51–71 (LGIYGLVFLFFPGLILFAPFL).

It belongs to the complex I NdhL subunit family. In terms of assembly, NDH-1 can be composed of about 15 different subunits; different subcomplexes with different compositions have been identified which probably have different functions.

The protein localises to the cellular thylakoid membrane. The catalysed reaction is a plastoquinone + NADH + (n+1) H(+)(in) = a plastoquinol + NAD(+) + n H(+)(out). The enzyme catalyses a plastoquinone + NADPH + (n+1) H(+)(in) = a plastoquinol + NADP(+) + n H(+)(out). Functionally, NDH-1 shuttles electrons from an unknown electron donor, via FMN and iron-sulfur (Fe-S) centers, to quinones in the respiratory and/or the photosynthetic chain. The immediate electron acceptor for the enzyme in this species is believed to be plastoquinone. Couples the redox reaction to proton translocation, and thus conserves the redox energy in a proton gradient. Cyanobacterial NDH-1 also plays a role in inorganic carbon-concentration. The protein is NAD(P)H-quinone oxidoreductase subunit L of Synechococcus sp. (strain WH7803).